Here is a 529-residue protein sequence, read N- to C-terminus: Acid-sensing ion channel 1C (529 aa).

Residues 1–51 (MTAMKGDSEDSIESMRPSNLQVFANNSTLHGMSHIFAYGHMTFRRFLWTLS) are Cytoplasmic-facing. A helical membrane pass occupies residues 52 to 68 (FMGSLGLLMYVCMDRVY). At 69-427 (YYFEFPHVTK…EKIEQKKAYE (359 aa)) the chain is on the extracellular side. 3 N-linked (GlcNAc...) asparagine glycosylation sites follow: Asn86, Asn155, and Asn161. 7 cysteine pairs are disulfide-bonded: Cys95–Cys196, Cys174–Cys181, Cys292–Cys367, Cys310–Cys363, Cys314–Cys361, Cys323–Cys345, and Cys325–Cys337. The N-linked (GlcNAc...) asparagine glycan is linked to Asn185. N-linked (GlcNAc...) asparagine glycans are attached at residues Asn368 and Asn395. A discontinuously helical membrane pass occupies residues 428-458 (VAGLLGDIGGQMGLFIGASVLTILEIFDYLY). Positions 444–446 (GAS) match the GAS motif; ion selectivity filter motif. The Cytoplasmic portion of the chain corresponds to 459–529 (EVLKDKILGS…PFVVGSNSGK (71 aa)).

It belongs to the amiloride-sensitive sodium channel (TC 1.A.6) family. ASIC1 subfamily. Homotrimer. Heterotrimer; with other ASIC proteins producing channel with different properties. Interacts with asic1a. As to expression, expressed in central nervous system.

It is found in the cell membrane. The protein localises to the postsynaptic cell membrane. The protein resides in the cell projection. It localises to the dendrite. It carries out the reaction Na(+)(in) = Na(+)(out). It catalyses the reaction K(+)(in) = K(+)(out). The catalysed reaction is Li(+)(in) = Li(+)(out). The enzyme catalyses Ca(2+)(in) = Ca(2+)(out). Inhibited by the diuretic drug amiloride. Functionally, forms voltage-independent, pH-gated trimeric sodium channels that act as postsynaptic excitatory receptors in the nervous system, playing a crucial role in regulating synaptic plasticity, learning, and memory. Upon extracellular pH drop this channel elicits transient, fast activating, and completely desensitizing inward currents. Displays high selectivity for sodium ions but can also permit the permeation of other cations. This is Acid-sensing ion channel 1C from Danio rerio (Zebrafish).